A 332-amino-acid polypeptide reads, in one-letter code: Polygalacturonase inhibitor 1 (332 aa).

A signal peptide spans 1 to 24; the sequence is MASTASFMLAVLLAVAVAAAPARA. Disulfide bonds link Cys27/Cys58 and Cys59/Cys66. LRR repeat units follow at residues 72–96, 97–118, 119–142, 143–166, 167–192, 193–215, 216–236, 237–259, 260–283, and 284–310; these read VNNV…GLTA, LMSL…CLTA, LSNL…SLAR, IRSL…SFSD, LPNL…VQGQ, FRSL…AQDE, INTV…LFAA, GRPI…KLVF, PPEL…SLAA, and LSTL…VIRH. An N-linked (GlcNAc...) asparagine glycan is attached at Asn131. Intrachain disulfides connect Cys298-Cys312, Cys298-Cys320, and Cys320-Cys329.

The protein belongs to the polygalacturonase-inhibiting protein family. Highly expressed in calli, immature and mature panicles, and in three inner floral organs: lodicules, stamens and carpels. Expressed at low level in seedling roots and mature stems.

The protein localises to the secreted. Its subcellular location is the cell wall. Functionally, inhibitor of fungal polygalacturonase. Regulates floral organ number. The protein is Polygalacturonase inhibitor 1 of Oryza sativa subsp. japonica (Rice).